Here is a 249-residue protein sequence, read N- to C-terminus: Derlin-2.2 (249 aa).

The Cytoplasmic segment spans residues 1–21 (MAQAVEEWYRQMPIITRSYLT). A helical membrane pass occupies residues 22 to 42 (AAVVTTVGCTLEIISPYHLYL). Topologically, residues 43 to 96 (NPKLVVQHYEIWRLVTNFLYFRKMDLDFLFHMFFLARYCKLLEENSFRGRTADF) are lumenal. The chain crosses the membrane as a helical span at residues 97–117 (FYMLLFGATVLTGIVLIGGMI). Topologically, residues 118–122 (PYISE) are cytoplasmic. The helical transmembrane segment at 123–143 (TFARILFLSNSLTFMMVYVWS) threads the bilayer. Residues 144–152 (KHNPFIHMS) lie on the Lumenal side of the membrane. The chain crosses the membrane as a helical span at residues 153-173 (FLGLFTFTAAYLPWVLLGFSI). At 174-249 (LVGSSTWVDL…GAIGVDPQAQ (76 aa)) the chain is on the cytoplasmic side.

It belongs to the derlin family. In terms of tissue distribution, expressed in roots, stalks, leaves, immature ears, embryo and endosperm.

It localises to the endoplasmic reticulum membrane. In terms of biological role, may be involved in the degradation process of specific misfolded endoplasmic reticulum (ER) luminal proteins. This is Derlin-2.2 (DER2.2) from Zea mays (Maize).